The chain runs to 89 residues: Acylphosphatase (89 aa).

Positions 3–89 constitute an Acylphosphatase-like domain; the sequence is CKRWILYGRV…GNYGSFHIEY (87 aa). Residues arginine 18 and asparagine 36 contribute to the active site.

Belongs to the acylphosphatase family.

It catalyses the reaction an acyl phosphate + H2O = a carboxylate + phosphate + H(+). The sequence is that of Acylphosphatase (acyP) from Petrotoga mobilis (strain DSM 10674 / SJ95).